We begin with the raw amino-acid sequence, 837 residues long: Periplasmic nitrate reductase (837 aa).

The segment at residues 1-31 (MKLNRRDFIKANAAAAAISAAGLSVPGAAVA) is a signal peptide (tat-type signal). Positions 37 to 93 (IRWDKAACRFCGTGCGVLVGTQDGRVVATQGDPDAPVNRGLNCIKGYFLSKIMYGAD) constitute a 4Fe-4S Mo/W bis-MGD-type domain. [4Fe-4S] cluster-binding residues include Cys-44, Cys-47, Cys-51, and Cys-79. Residues Lys-81, Gln-148, Asn-173, Cys-177, 210–217 (WGSNMAEM), 241–245 (STFEH), and 260–262 (QTD) each bind Mo-bis(molybdopterin guanine dinucleotide). A disordered region spans residues 308 to 329 (EKNATSNGYPDADGKPKGDTGK). Basic and acidic residues predominate over residues 319-329 (ADGKPKGDTGK). Mo-bis(molybdopterin guanine dinucleotide) contacts are provided by residues Met-381, Gln-385, Asn-491, 517 to 518 (SD), Lys-540, Asp-567, and 727 to 736 (TGRVLEHWHT). Phe-803 serves as a coordination point for substrate. Mo-bis(molybdopterin guanine dinucleotide) contacts are provided by Asn-811 and Lys-828.

The protein belongs to the prokaryotic molybdopterin-containing oxidoreductase family. NasA/NapA/NarB subfamily. As to quaternary structure, component of the periplasmic nitrate reductase NapAB complex composed of NapA and NapB. [4Fe-4S] cluster is required as a cofactor. Mo-bis(molybdopterin guanine dinucleotide) serves as cofactor. In terms of processing, predicted to be exported by the Tat system. The position of the signal peptide cleavage has not been experimentally proven.

The protein resides in the periplasm. It carries out the reaction 2 Fe(II)-[cytochrome] + nitrate + 2 H(+) = 2 Fe(III)-[cytochrome] + nitrite + H2O. Functionally, catalytic subunit of the periplasmic nitrate reductase complex NapAB. Receives electrons from NapB and catalyzes the reduction of nitrate to nitrite. In Dechloromonas aromatica (strain RCB), this protein is Periplasmic nitrate reductase.